The primary structure comprises 466 residues: Delta-1 crystallin (466 aa).

Ala2 carries the blocked amino end (Ala) modification.

This sequence belongs to the lyase 1 family. Argininosuccinate lyase subfamily. As to quaternary structure, homotetramer. In terms of processing, the N-terminus is blocked. In terms of tissue distribution, eye lens.

In terms of biological role, delta crystallin, the principal crystallin in embryonic lens, is found only in birds and reptiles. In Gallus gallus (Chicken), this protein is Delta-1 crystallin (ASL1).